Reading from the N-terminus, the 204-residue chain is Carbon disulfide hydrolase (204 aa).

Residues cysteine 35, histidine 88, and cysteine 91 each coordinate Zn(2+).

This sequence belongs to the beta-class carbonic anhydrase family. In terms of assembly, forms a hexadecameric catenane homooligomer, through interactions of two interlocked octameric rings. The cofactor is Zn(2+).

The catalysed reaction is carbon disulfide + 2 H2O = 2 hydrogen sulfide + CO2 + 2 H(+). It functions in the pathway sulfur metabolism; hydrogen sulfide biosynthesis. In terms of biological role, catalyzes the conversion of carbon disulfide into hydrogen sulfide and carbon dioxide, with carbonyl sulfide as an intermediate. Likely plays a key role in sulfur metabolism in S.solfataricus. Does not show carbonic anhydrase activity (hydration of CO(2) to carbonate). The protein is Carbon disulfide hydrolase of Saccharolobus solfataricus (strain ATCC 35092 / DSM 1617 / JCM 11322 / P2) (Sulfolobus solfataricus).